The chain runs to 135 residues: Ribonuclease P protein component (135 aa).

Belongs to the RnpA family. Consists of a catalytic RNA component (M1 or rnpB) and a protein subunit.

The catalysed reaction is Endonucleolytic cleavage of RNA, removing 5'-extranucleotides from tRNA precursor.. Functionally, RNaseP catalyzes the removal of the 5'-leader sequence from pre-tRNA to produce the mature 5'-terminus. It can also cleave other RNA substrates such as 4.5S RNA. The protein component plays an auxiliary but essential role in vivo by binding to the 5'-leader sequence and broadening the substrate specificity of the ribozyme. The chain is Ribonuclease P protein component from Pseudomonas aeruginosa (strain LESB58).